We begin with the raw amino-acid sequence, 182 residues long: Lipoprotein signal peptidase (182 aa).

A run of 4 helical transmembrane segments spans residues 15 to 35 (IYLGVIFLGIVLDLVTKFLVI), 44 to 64 (LEVFGSFFRMTLTFNTGFVFG), 65 to 85 (AFQDNAIPSLIATGVAIVFLI), and 97 to 117 (PWGWNLVMAGAFGNFLDKFFV). Active-site residues include Asp-140 and Asp-162. A helical transmembrane segment spans residues 155–175 (WPAFNVADSCVTIGLTILIFT).

Belongs to the peptidase A8 family.

It localises to the cell inner membrane. It catalyses the reaction Release of signal peptides from bacterial membrane prolipoproteins. Hydrolyzes -Xaa-Yaa-Zaa-|-(S,diacylglyceryl)Cys-, in which Xaa is hydrophobic (preferably Leu), and Yaa (Ala or Ser) and Zaa (Gly or Ala) have small, neutral side chains.. It participates in protein modification; lipoprotein biosynthesis (signal peptide cleavage). In terms of biological role, this protein specifically catalyzes the removal of signal peptides from prolipoproteins. This Leptospira interrogans serogroup Icterohaemorrhagiae serovar Lai (strain 56601) protein is Lipoprotein signal peptidase.